Consider the following 959-residue polypeptide: Vacuolar membrane protease (959 aa).

Residues 1-13 (MARLNPLSFTPGP) are Cytoplasmic-facing. The helical transmembrane segment at 14-34 (VIFFTCAVYIALFAALLTVHL) threads the bilayer. The Vacuolar segment spans residues 35–378 (RVPDYPSKTP…KVFVVFQLHT (344 aa)). N-linked (GlcNAc...) asparagine glycans are attached at residues Asn-48, Asn-102, and Asn-105. The tract at residues 128 to 149 (GSEDDEPYHSPQSSPPGERRLD) is disordered. Zn(2+) is bound by residues His-158 and Asp-170. Catalysis depends on Glu-204, which acts as the Proton acceptor. The Zn(2+) site is built by Glu-205, Glu-230, and His-303. Residues 379–399 (MFALCVTLLVVAPLFLIGLTF) traverse the membrane as a helical segment. Topologically, residues 400-432 (GLSKADKNYLFARKAYMYSSDDDHPVHLYGWRG) are cytoplasmic. The chain crosses the membrane as a helical span at residues 433 to 453 (FFRFPIVFSIATAVVVGLAYL). At 454 to 463 (MVRLNPLILY) the chain is on the vacuolar side. The chain crosses the membrane as a helical span at residues 464–484 (SSPYAVWSMMLSAWFSVAWFF). The Cytoplasmic portion of the chain corresponds to 485-498 (SRGASAMRPSALQR). A helical transmembrane segment spans residues 499 to 519 (MYALIWLFAGSFALLAFVTVL). Topologically, residues 520–524 (SNNYQ) are vacuolar. Residues 525-545 (VAGGYFALFYFAGIFLALVLS) form a helical membrane-spanning segment. Residues 546–645 (YLELFFAPTK…YPGEQDWSGK (100 aa)) lie on the Cytoplasmic side of the membrane. Disordered stretches follow at residues 566–594 (DEPV…DATE) and 606–635 (FARH…LKQP). Basic and acidic residues predominate over residues 612-626 (RRDSIDDENGNRDEE). Residues 646–666 (LPGWLWLLQLLLVAPIVVILV) form a helical membrane-spanning segment. The Vacuolar segment spans residues 667 to 688 (GQIALLLTSALHQTPADGNSSL). An N-linked (GlcNAc...) asparagine glycan is attached at Asn-685. Residues 689–709 (FVYLAFALLTTLLLAPIGPFI) form a helical membrane-spanning segment. Over 710 to 716 (HRFTWHV) the chain is Cytoplasmic. The helical transmembrane segment at 717 to 737 (PTFVFLVCVATVIYNLVAFPF) threads the bilayer. The Vacuolar segment spans residues 738 to 959 (SREHRLKVYF…LVEGFKYFQV (222 aa)). Residues Asn-785, Asn-818, Asn-834, Asn-864, and Asn-899 are each glycosylated (N-linked (GlcNAc...) asparagine).

It belongs to the peptidase M28 family. Requires Zn(2+) as cofactor.

It is found in the vacuole membrane. In terms of biological role, may be involved in vacuolar sorting and osmoregulation. This is Vacuolar membrane protease from Phaeosphaeria nodorum (strain SN15 / ATCC MYA-4574 / FGSC 10173) (Glume blotch fungus).